Reading from the N-terminus, the 180-residue chain is MGLTVSALFSRIFGKKQMRILMVGLDAAGKTTILYKLKLGEIVTTIPTIGFNVETVEYKNICFTVWDVGGQDKIRPLWRHYFQNTQGLIFVVDSNDRERVQESADELQKMLQEDELRDAVLLVFANKQDMPNAMPVSELTDKLGLQHLRSRTWYVQATCATQGTGLYDGLDWLSHELSKR.

Gly-2 carries the N-myristoyl glycine lipid modification. GTP-binding positions include 24-31 (GLDAAGKT), 67-71 (DVGGQ), and 126-129 (NKQD).

It belongs to the small GTPase superfamily. Arf family. In terms of assembly, interacts (when activated) with GGA1, GGA2 and GGA3; the interaction is required for proper subcellular location of GGA1, GGA2 and GGA3. Binds ASAP2. Interacts with NCS1/FREQ at the Golgi complex. Interacts with RAB11FIP3 and RAB11FIP4.

It is found in the golgi apparatus. Its subcellular location is the cytoplasm. It localises to the perinuclear region. The protein resides in the membrane. The protein localises to the trans-Golgi network membrane. Its function is as follows. GTP-binding protein involved in protein trafficking; may modulate vesicle budding and uncoating within the Golgi apparatus. (Microbial infection) Functions as an allosteric activator of the cholera toxin catalytic subunit, an ADP-ribosyltransferase. The sequence is that of ADP-ribosylation factor 5 (ARF5) from Homo sapiens (Human).